Consider the following 150-residue polypeptide: S-protein homolog 28 (150 aa).

Asn-122 carries N-linked (GlcNAc...) asparagine glycosylation.

Belongs to the plant self-incompatibility (S1) protein family.

The protein localises to the secreted. The chain is S-protein homolog 28 from Arabidopsis thaliana (Mouse-ear cress).